The sequence spans 149 residues: Calmodulin (149 aa).

Position 2 is an N-acetylthreonine (threonine 2). 4 EF-hand domains span residues 8-43 (EQIAEFKEAFSLFDKDGDGTITTKELGTVMRSLGQN), 44-79 (PTEAELQDMINEVDADGNGTIDFPEFLTMMARKMKE), 81-116 (DSEEEIREAFRVFDKDGNGFISAAELRHVMTNLGEK), and 117-149 (LTDEEVDEMIREADIDGDGQVNYEEFVAMMTSK). Ca(2+) is bound by residues aspartate 21, aspartate 23, aspartate 25, threonine 27, glutamate 32, aspartate 57, aspartate 59, asparagine 61, threonine 63, glutamate 68, aspartate 94, aspartate 96, asparagine 98, and glutamate 105. Lysine 116 carries the post-translational modification N6,N6,N6-trimethyllysine. Positions 130, 132, 134, 136, and 141 each coordinate Ca(2+).

Belongs to the calmodulin family.

Functionally, calmodulin mediates the control of a large number of enzymes, ion channels and other proteins by Ca(2+). Among the enzymes to be stimulated by the calmodulin-Ca(2+) complex are a number of protein kinases and phosphatases. This is Calmodulin from Halichondria okadai (Marine sponge).